We begin with the raw amino-acid sequence, 175 residues long: Protein FanH (175 aa).

Positions 1–20 are cleaved as a signal peptide; the sequence is MIKKVPVLLFFMASISITHA. The cysteines at positions 39 and 77 are disulfide-linked.

The protein localises to the fimbrium. Involved in the biosynthesis of K99 fimbriae. This chain is Protein FanH (fanH), found in Escherichia coli.